The following is a 185-amino-acid chain: Ribosome-recycling factor (185 aa).

The protein belongs to the RRF family.

It localises to the cytoplasm. Responsible for the release of ribosomes from messenger RNA at the termination of protein biosynthesis. May increase the efficiency of translation by recycling ribosomes from one round of translation to another. The sequence is that of Ribosome-recycling factor from Pseudomonas fluorescens (strain ATCC BAA-477 / NRRL B-23932 / Pf-5).